A 124-amino-acid polypeptide reads, in one-letter code: Large ribosomal subunit protein bL12 (124 aa).

Belongs to the bacterial ribosomal protein bL12 family. In terms of assembly, homodimer. Part of the ribosomal stalk of the 50S ribosomal subunit. Forms a multimeric L10(L12)X complex, where L10 forms an elongated spine to which 2 to 4 L12 dimers bind in a sequential fashion. Binds GTP-bound translation factors.

In terms of biological role, forms part of the ribosomal stalk which helps the ribosome interact with GTP-bound translation factors. Is thus essential for accurate translation. This chain is Large ribosomal subunit protein bL12, found in Burkholderia thailandensis (strain ATCC 700388 / DSM 13276 / CCUG 48851 / CIP 106301 / E264).